Here is a 231-residue protein sequence, read N- to C-terminus: MLTKKQLDLLEFIHKRLQADGVPPSFDEMKLALDLRSKSGIHRLITALEERGFIRRLAHRARAIEIVKLPESLGGEPTVGFQPRVIDGDRPDRPRPANAEPVTIHAVELPVMGRIAAGVPIEAISQVSHQVAVPGSMVGKGEHYALEVKGDSMIEAGINDGDVVVIRETSTADNGDIVVALVDDSEATLKRFFRRGASIALEAANPAYETRVLPSDRVRVQGRLVGLIRTY.

Residues 26–46 (FDEMKLALDLRSKSGIHRLIT) constitute a DNA-binding region (H-T-H motif). The interval 79–98 (VGFQPRVIDGDRPDRPRPAN) is disordered. The span at 86 to 95 (IDGDRPDRPR) shows a compositional bias: basic and acidic residues. Residues Ser-152 and Lys-190 each act as for autocatalytic cleavage activity in the active site.

It belongs to the peptidase S24 family. As to quaternary structure, homodimer.

It catalyses the reaction Hydrolysis of Ala-|-Gly bond in repressor LexA.. Its function is as follows. Represses a number of genes involved in the response to DNA damage (SOS response), including recA and lexA. In the presence of single-stranded DNA, RecA interacts with LexA causing an autocatalytic cleavage which disrupts the DNA-binding part of LexA, leading to derepression of the SOS regulon and eventually DNA repair. This chain is LexA repressor, found in Ruegeria pomeroyi (strain ATCC 700808 / DSM 15171 / DSS-3) (Silicibacter pomeroyi).